The sequence spans 71 residues: UPF0346 protein SAK_1533 (71 aa).

This sequence belongs to the UPF0346 family.

The polypeptide is UPF0346 protein SAK_1533 (Streptococcus agalactiae serotype Ia (strain ATCC 27591 / A909 / CDC SS700)).